A 696-amino-acid chain; its full sequence is Glycine--tRNA ligase beta subunit (696 aa).

The protein belongs to the class-II aminoacyl-tRNA synthetase family. As to quaternary structure, tetramer of two alpha and two beta subunits.

The protein resides in the cytoplasm. It catalyses the reaction tRNA(Gly) + glycine + ATP = glycyl-tRNA(Gly) + AMP + diphosphate. This is Glycine--tRNA ligase beta subunit from Methylorubrum extorquens (strain CM4 / NCIMB 13688) (Methylobacterium extorquens).